We begin with the raw amino-acid sequence, 145 residues long: Putative pre-16S rRNA nuclease (145 aa).

The protein belongs to the YqgF nuclease family.

It localises to the cytoplasm. Its function is as follows. Could be a nuclease involved in processing of the 5'-end of pre-16S rRNA. This is Putative pre-16S rRNA nuclease from Thiobacillus denitrificans (strain ATCC 25259 / T1).